A 557-amino-acid chain; its full sequence is Urocanate hydratase (557 aa).

Residues glycine 52 to glycine 53, glutamine 130, glycine 176 to glycine 178, glutamate 196, asparagine 242 to alanine 243, glutamine 263 to histidine 267, tyrosine 273 to leucine 274, and tyrosine 322 contribute to the NAD(+) site. The active site involves cysteine 410. Residue glycine 492 participates in NAD(+) binding.

Belongs to the urocanase family. Requires NAD(+) as cofactor.

It is found in the cytoplasm. The enzyme catalyses 4-imidazolone-5-propanoate = trans-urocanate + H2O. Its pathway is amino-acid degradation; L-histidine degradation into L-glutamate; N-formimidoyl-L-glutamate from L-histidine: step 2/3. Functionally, catalyzes the conversion of urocanate to 4-imidazolone-5-propionate. This chain is Urocanate hydratase, found in Rhizobium meliloti (strain 1021) (Ensifer meliloti).